A 428-amino-acid polypeptide reads, in one-letter code: UPF0761 membrane protein Ppha_1623 (428 aa).

6 helical membrane-spanning segments follow: residues 52–72, 108–128, 148–168, 189–209, 216–233, and 252–272; these read LLSIVPILAVILSILNVFVVF, SVPILGGVFLFIIALFLISTV, FTLYWTVLTLGPVLIGSSLAA, LLSFFPFINSVAAFFLLYMLV, FVHAFSGALLAALLFELS, and GALSVIPMLFFWVYLGWIVVL.

It belongs to the UPF0761 family.

It is found in the cell inner membrane. In Pelodictyon phaeoclathratiforme (strain DSM 5477 / BU-1), this protein is UPF0761 membrane protein Ppha_1623.